Consider the following 46-residue polypeptide: MESSSPAMSVAIAVLAALLGLTGFGVYTAFGPPSKNLDDPFDDHED.

Residues Val10 to Phe30 traverse the membrane as a helical segment.

This sequence belongs to the PsbN family.

Its subcellular location is the cellular thylakoid membrane. In terms of biological role, may play a role in photosystem I and II biogenesis. The sequence is that of Protein PsbN from Synechococcus sp. (strain CC9311).